The following is a 60-amino-acid chain: uncharacterized protein (60 aa).

This is an uncharacterized protein from Dictyostelium discoideum (Social amoeba).